We begin with the raw amino-acid sequence, 294 residues long: Glycine--tRNA ligase alpha subunit (294 aa).

Belongs to the class-II aminoacyl-tRNA synthetase family. As to quaternary structure, tetramer of two alpha and two beta subunits.

The protein resides in the cytoplasm. The catalysed reaction is tRNA(Gly) + glycine + ATP = glycyl-tRNA(Gly) + AMP + diphosphate. This Trichodesmium erythraeum (strain IMS101) protein is Glycine--tRNA ligase alpha subunit.